The primary structure comprises 251 residues: Octanoyltransferase (251 aa).

In terms of domain architecture, BPL/LPL catalytic spans 29-216; the sequence is GVIQDTLLLL…NFGFIFKEQV (188 aa). Substrate contacts are provided by residues 74 to 81, 146 to 148, and 159 to 161; these read RGGDVTFH, AIG, and GFA. Cys177 (acyl-thioester intermediate) is an active-site residue.

This sequence belongs to the LipB family.

The protein resides in the cytoplasm. It catalyses the reaction octanoyl-[ACP] + L-lysyl-[protein] = N(6)-octanoyl-L-lysyl-[protein] + holo-[ACP] + H(+). Its pathway is protein modification; protein lipoylation via endogenous pathway; protein N(6)-(lipoyl)lysine from octanoyl-[acyl-carrier-protein]: step 1/2. Its function is as follows. Catalyzes the transfer of endogenously produced octanoic acid from octanoyl-acyl-carrier-protein onto the lipoyl domains of lipoate-dependent enzymes. Lipoyl-ACP can also act as a substrate although octanoyl-ACP is likely to be the physiological substrate. The sequence is that of Octanoyltransferase from Koribacter versatilis (strain Ellin345).